The following is a 387-amino-acid chain: tRNA pseudouridine synthase B (387 aa).

Catalysis depends on Asp-43, which acts as the Nucleophile.

This sequence belongs to the pseudouridine synthase TruB family. Type 1 subfamily.

The catalysed reaction is uridine(55) in tRNA = pseudouridine(55) in tRNA. Functionally, responsible for synthesis of pseudouridine from uracil-55 in the psi GC loop of transfer RNAs. In Bifidobacterium longum (strain DJO10A), this protein is tRNA pseudouridine synthase B.